Consider the following 637-residue polypeptide: 3D-(3,5/4)-trihydroxycyclohexane-1,2-dione hydrolase (637 aa).

Glutamate 66 is a binding site for thiamine diphosphate. The thiamine pyrophosphate binding stretch occupies residues serine 442–glycine 522. Mg(2+) contacts are provided by aspartate 493 and asparagine 520.

Belongs to the TPP enzyme family. It depends on Mg(2+) as a cofactor. The cofactor is thiamine diphosphate.

It carries out the reaction 3D-3,5/4-trihydroxycyclohexane-1,2-dione + H2O = 5-deoxy-D-glucuronate + H(+). Its pathway is polyol metabolism; myo-inositol degradation into acetyl-CoA; acetyl-CoA from myo-inositol: step 3/7. In terms of biological role, involved in the cleavage of the C1-C2 bond of 3D-(3,5/4)-trihydroxycyclohexane-1,2-dione (THcHDO) to yield 5-deoxy-glucuronate (5DG). This chain is 3D-(3,5/4)-trihydroxycyclohexane-1,2-dione hydrolase (iolD), found in Bacillus subtilis (strain 168).